Here is a 309-residue protein sequence, read N- to C-terminus: Porphobilinogen deaminase (309 aa).

Cysteine 242 is modified (S-(dipyrrolylmethanemethyl)cysteine).

It belongs to the HMBS family. In terms of assembly, monomer. It depends on dipyrromethane as a cofactor.

It carries out the reaction 4 porphobilinogen + H2O = hydroxymethylbilane + 4 NH4(+). Its pathway is porphyrin-containing compound metabolism; protoporphyrin-IX biosynthesis; coproporphyrinogen-III from 5-aminolevulinate: step 2/4. Its function is as follows. Tetrapolymerization of the monopyrrole PBG into the hydroxymethylbilane pre-uroporphyrinogen in several discrete steps. This Legionella pneumophila subsp. pneumophila (strain Philadelphia 1 / ATCC 33152 / DSM 7513) protein is Porphobilinogen deaminase.